Reading from the N-terminus, the 295-residue chain is Probable dTDP-4,6-dihydroxy-2-methyloxan-3-one 4-ketoreductase (295 aa).

NADH is bound by residues 10–12 (GML), 36–37 (DV), 60–62 (AYT), Tyr126, and Lys130. NADPH is bound by residues 11-12 (ML), 36-37 (DV), 60-62 (AYT), Tyr126, and Lys130. Tyr126 functions as the Proton donor/acceptor in the catalytic mechanism.

This sequence belongs to the dTDP-4-dehydrorhamnose reductase family. Requires Mg(2+) as cofactor.

Its pathway is antibiotic biosynthesis. Its function is as follows. Involved in the biosynthesis of one of the two 2,6-deoxysugars, dTDP-L-oleandrose, attached to the macrolactone ring oleandolide to produce the aglycone antibiotic oleandomycin. Probably catalyzes the reduction of dTDP-4-keto-2,6-dideoxy-beta-L-galactose to yield dTDP-L-olivose. This is Probable dTDP-4,6-dihydroxy-2-methyloxan-3-one 4-ketoreductase from Streptomyces antibioticus.